Reading from the N-terminus, the 107-residue chain is U-scoloptoxin(19)-Sm1a (107 aa).

An N-terminal signal peptide occupies residues 1–20 (MRFLVSVAFLLTVSSLLVSG).

This sequence belongs to the scoloptoxin-19 family. Post-translationally, contains 6 disulfide bonds. In terms of tissue distribution, expressed by the venom gland.

It is found in the secreted. The sequence is that of U-scoloptoxin(19)-Sm1a from Scolopendra morsitans (Tanzanian blue ringleg centipede).